Reading from the N-terminus, the 236-residue chain is UPF0257 lipoprotein YnfC (236 aa).

The N-terminal stretch at 1–16 (MKYKLLPCLLAIFLTG) is a signal peptide. The N-palmitoyl cysteine moiety is linked to residue cysteine 17. Cysteine 17 carries S-diacylglycerol cysteine lipidation.

It belongs to the UPF0257 family.

It localises to the cell membrane. The protein is UPF0257 lipoprotein YnfC of Escherichia coli O7:K1 (strain IAI39 / ExPEC).